Here is a 178-residue protein sequence, read N- to C-terminus: uncharacterized protein (178 aa).

To E.coli YrdD.

This is an uncharacterized protein from Haemophilus influenzae (strain ATCC 51907 / DSM 11121 / KW20 / Rd).